The primary structure comprises 513 residues: Na(+)/H(+) antiporter NhaB (513 aa).

Transmembrane regions (helical) follow at residues 23–43 (LALI…PFVA), 52–72 (IFTL…LLAI), 97–117 (LLLM…LFIF), 120–140 (LLLS…AAAF), 144–164 (FLDA…FYGI), 202–222 (LMMH…VGEP), 238–258 (FFLR…LTCL), 303–323 (AIIG…VGLI), 348–368 (TESL…AVII), 391–411 (LFYI…VGTI), 447–467 (ATPN…APLI), and 475–495 (VWMA…CVEF).

This sequence belongs to the NhaB Na(+)/H(+) (TC 2.A.34) antiporter family.

It localises to the cell inner membrane. The catalysed reaction is 2 Na(+)(in) + 3 H(+)(out) = 2 Na(+)(out) + 3 H(+)(in). In terms of biological role, na(+)/H(+) antiporter that extrudes sodium in exchange for external protons. The chain is Na(+)/H(+) antiporter NhaB from Escherichia coli O6:K15:H31 (strain 536 / UPEC).